We begin with the raw amino-acid sequence, 247 residues long: Pyrroloquinoline-quinone synthase (247 aa).

This sequence belongs to the PqqC family.

It catalyses the reaction 6-(2-amino-2-carboxyethyl)-7,8-dioxo-1,2,3,4,7,8-hexahydroquinoline-2,4-dicarboxylate + 3 O2 = pyrroloquinoline quinone + 2 H2O2 + 2 H2O + H(+). It functions in the pathway cofactor biosynthesis; pyrroloquinoline quinone biosynthesis. Ring cyclization and eight-electron oxidation of 3a-(2-amino-2-carboxyethyl)-4,5-dioxo-4,5,6,7,8,9-hexahydroquinoline-7,9-dicarboxylic-acid to PQQ. The chain is Pyrroloquinoline-quinone synthase from Rhizobium rhizogenes (strain K84 / ATCC BAA-868) (Agrobacterium radiobacter).